The chain runs to 405 residues: Phosphopentomutase (405 aa).

Mn(2+) contacts are provided by aspartate 10, aspartate 303, histidine 308, aspartate 344, histidine 345, and histidine 356.

It belongs to the phosphopentomutase family. Mn(2+) serves as cofactor.

It localises to the cytoplasm. It carries out the reaction 2-deoxy-alpha-D-ribose 1-phosphate = 2-deoxy-D-ribose 5-phosphate. It catalyses the reaction alpha-D-ribose 1-phosphate = D-ribose 5-phosphate. It functions in the pathway carbohydrate degradation; 2-deoxy-D-ribose 1-phosphate degradation; D-glyceraldehyde 3-phosphate and acetaldehyde from 2-deoxy-alpha-D-ribose 1-phosphate: step 1/2. Isomerase that catalyzes the conversion of deoxy-ribose 1-phosphate (dRib-1-P) and ribose 1-phosphate (Rib-1-P) to deoxy-ribose 5-phosphate (dRib-5-P) and ribose 5-phosphate (Rib-5-P), respectively. The sequence is that of Phosphopentomutase from Shewanella pealeana (strain ATCC 700345 / ANG-SQ1).